We begin with the raw amino-acid sequence, 408 residues long: 1-deoxy-D-xylulose 5-phosphate reductoisomerase (408 aa).

7 residues coordinate NADPH: T19, G20, S21, I22, G45, N47, and N130. 1-deoxy-D-xylulose 5-phosphate is bound at residue K131. E132 is a binding site for NADPH. D156 is a binding site for Mn(2+). 1-deoxy-D-xylulose 5-phosphate contacts are provided by S157, E158, S182, and H205. E158 provides a ligand contact to Mn(2+). Residue G211 coordinates NADPH. S218, N223, K224, and E227 together coordinate 1-deoxy-D-xylulose 5-phosphate. E227 contacts Mn(2+).

This sequence belongs to the DXR family. Mg(2+) serves as cofactor. It depends on Mn(2+) as a cofactor.

The enzyme catalyses 2-C-methyl-D-erythritol 4-phosphate + NADP(+) = 1-deoxy-D-xylulose 5-phosphate + NADPH + H(+). The protein operates within isoprenoid biosynthesis; isopentenyl diphosphate biosynthesis via DXP pathway; isopentenyl diphosphate from 1-deoxy-D-xylulose 5-phosphate: step 1/6. Catalyzes the NADPH-dependent rearrangement and reduction of 1-deoxy-D-xylulose-5-phosphate (DXP) to 2-C-methyl-D-erythritol 4-phosphate (MEP). The sequence is that of 1-deoxy-D-xylulose 5-phosphate reductoisomerase from Gluconobacter oxydans (strain 621H) (Gluconobacter suboxydans).